The chain runs to 337 residues: tRNA N6-adenosine threonylcarbamoyltransferase (337 aa).

Fe cation contacts are provided by H111 and H115. Residues 134–138 (LVSGG), D167, G180, and N272 each bind substrate. Residue D300 participates in Fe cation binding.

Belongs to the KAE1 / TsaD family. The cofactor is Fe(2+).

It localises to the cytoplasm. It catalyses the reaction L-threonylcarbamoyladenylate + adenosine(37) in tRNA = N(6)-L-threonylcarbamoyladenosine(37) in tRNA + AMP + H(+). Its function is as follows. Required for the formation of a threonylcarbamoyl group on adenosine at position 37 (t(6)A37) in tRNAs that read codons beginning with adenine. Is involved in the transfer of the threonylcarbamoyl moiety of threonylcarbamoyl-AMP (TC-AMP) to the N6 group of A37, together with TsaE and TsaB. TsaD likely plays a direct catalytic role in this reaction. The chain is tRNA N6-adenosine threonylcarbamoyltransferase from Yersinia enterocolitica serotype O:8 / biotype 1B (strain NCTC 13174 / 8081).